A 376-amino-acid chain; its full sequence is Succinyl-diaminopimelate desuccinylase (376 aa).

A Zn(2+)-binding site is contributed by His-67. Asp-69 is an active-site residue. Residue Asp-100 participates in Zn(2+) binding. The active-site Proton acceptor is Glu-134. Residues Glu-135, Glu-163, and His-349 each coordinate Zn(2+).

It belongs to the peptidase M20A family. DapE subfamily. As to quaternary structure, homodimer. It depends on Zn(2+) as a cofactor. The cofactor is Co(2+).

The enzyme catalyses N-succinyl-(2S,6S)-2,6-diaminopimelate + H2O = (2S,6S)-2,6-diaminopimelate + succinate. It participates in amino-acid biosynthesis; L-lysine biosynthesis via DAP pathway; LL-2,6-diaminopimelate from (S)-tetrahydrodipicolinate (succinylase route): step 3/3. In terms of biological role, catalyzes the hydrolysis of N-succinyl-L,L-diaminopimelic acid (SDAP), forming succinate and LL-2,6-diaminopimelate (DAP), an intermediate involved in the bacterial biosynthesis of lysine and meso-diaminopimelic acid, an essential component of bacterial cell walls. This chain is Succinyl-diaminopimelate desuccinylase, found in Idiomarina loihiensis (strain ATCC BAA-735 / DSM 15497 / L2-TR).